Here is a 131-residue protein sequence, read N- to C-terminus: Flagellar assembly factor FliW (131 aa).

The protein belongs to the FliW family. Interacts with translational regulator CsrA and flagellin(s).

The protein localises to the cytoplasm. Functionally, acts as an anti-CsrA protein, binds CsrA and prevents it from repressing translation of its target genes, one of which is flagellin. Binds to flagellin and participates in the assembly of the flagellum. This chain is Flagellar assembly factor FliW, found in Campylobacter lari (strain RM2100 / D67 / ATCC BAA-1060).